A 383-amino-acid polypeptide reads, in one-letter code: Schlafen-like protein 3 (383 aa).

An SLFN-like fold region spans residues F118 to G266. The helical transmembrane segment at L354–Y374 threads the bilayer.

This sequence belongs to the Schlafen family. Component of the PUCH (precursor of 21U RNA 5'-end cleavage holoenzyme) complex; consisting of tofu-1, tofu-2 and either slfl-3 or slfl-4. Within the complex, interacts (via N-terminus) with tofu-2 (via N-terminus); the presence of tofu-1 is required for the interaction.

The protein resides in the mitochondrion membrane. Component of the trimeric PUCH (precursor of 21U RNA 5'-end cleavage holoenzyme) complex, that acts as an endoribonuclease processing the 5'-end of precursor Piwi-interacting RNAs (piRNAs). The PUCH complex consists of tofu-1, tofu-2 and either slfl-3 or slfl-4, where tofu-2 exhibits endoribonuclease activity. PUCH-mediated processing strictly requires a 7-methyl-G cap (m7 G-cap) and an uracil at position three (U3). PUCH also exhibits a strict bias for piRNA precursors with an A or G at position 1. Mature piRNA production is enhanced by the interaction of PUCH with the PETISCO complex, which is stabilizing piRNA precursors and allows their processing by PUCH. This chain is Schlafen-like protein 3, found in Caenorhabditis elegans.